Consider the following 444-residue polypeptide: Vacuolar protein sorting-associated protein 4B (444 aa).

The 79-residue stretch at 4–82 (TSPNLQKAID…KEYLKNKEKK (79 aa)) folds into the MIT domain. Positions 19–82 (AQEDKAGNYE…KEYLKNKEKK (64 aa)) form a coiled coil. The segment covering 78-88 (NKEKKAQKPVK) has biased composition (basic and acidic residues). The segment at 78–117 (NKEKKAQKPVKEGQPSPADEKGNDSDGEGESDDPEKKKLQ) is disordered. Residues Ser93, Ser102, and Ser108 each carry the phosphoserine modification. 174-181 (GPPGTGKS) serves as a coordination point for ATP. Residue Ser410 is modified to Phosphoserine.

Belongs to the AAA ATPase family. In terms of assembly, proposed to be monomeric or homodimeric in nucleotide-free form and to oligomerize upon binding to ATP to form two stacked hexameric or heptameric rings with a central pore through which ESCRT-III substrates are translocated in an ATP-dependent manner. In vitro, associates on the inside of a helical tubular structure formed by a CHMP2A-CHMP3 polymer. Interacts with CHMP1A, CHMP1B, CHMP2A, CHMP4B and CHMP6. Interacts with VPS4A; the interaction suggests a heteromeric assembly with VPS4A. Interacts with VTA1.

It localises to the late endosome membrane. The catalysed reaction is ATP + H2O = ADP + phosphate + H(+). In terms of biological role, involved in late steps of the endosomal multivesicular bodies (MVB) pathway. Recognizes membrane-associated ESCRT-III assemblies and catalyzes their disassembly, possibly in combination with membrane fission. Redistributes the ESCRT-III components to the cytoplasm for further rounds of MVB sorting. MVBs contain intraluminal vesicles (ILVs) that are generated by invagination and scission from the limiting membrane of the endosome and mostly are delivered to lysosomes enabling degradation of membrane proteins, such as stimulated growth factor receptors, lysosomal enzymes and lipids. VPS4A/B are required for the exosomal release of SDCBP, CD63 and syndecan. Functionally, (Microbial infection) In conjunction with the ESCRT machinery also appears to function in topologically equivalent membrane fission events, such as the terminal stages of cytokinesis and enveloped virus budding (lentiviruses). The chain is Vacuolar protein sorting-associated protein 4B (VPS4B) from Pongo abelii (Sumatran orangutan).